Reading from the N-terminus, the 216-residue chain is Protein-methionine-sulfoxide reductase heme-binding subunit MsrQ (216 aa).

Helical transmembrane passes span 16 to 36 (IWAL…LGAT), 48 to 68 (EHLL…ITPI), 82 to 102 (ALGL…MVLD), 119 to 139 (FITI…TSNI), and 155 to 175 (LVYV…KVVG).

It belongs to the MsrQ family. As to quaternary structure, heterodimer of a catalytic subunit (MsrP) and a heme-binding subunit (MsrQ). Requires FMN as cofactor. It depends on heme b as a cofactor.

It is found in the cell inner membrane. In terms of biological role, part of the MsrPQ system that repairs oxidized periplasmic proteins containing methionine sulfoxide residues (Met-O), using respiratory chain electrons. Thus protects these proteins from oxidative-stress damage caused by reactive species of oxygen and chlorine generated by the host defense mechanisms. MsrPQ is essential for the maintenance of envelope integrity under bleach stress, rescuing a wide series of structurally unrelated periplasmic proteins from methionine oxidation. MsrQ provides electrons for reduction to the reductase catalytic subunit MsrP, using the quinone pool of the respiratory chain. This is Protein-methionine-sulfoxide reductase heme-binding subunit MsrQ from Rhizobium meliloti (strain 1021) (Ensifer meliloti).